Here is a 443-residue protein sequence, read N- to C-terminus: 2-hydroxyethylphosphonate dioxygenase (443 aa).

The region spanning 8–63 is the HTH cro/C1-type 1 domain; it reads LAHWMNARKYTAAQTADLAGLPLDDLRRLLGDEANEPDPAAATALAEALSVEPSQL. Lys-16 serves as a coordination point for substrate. Positions 19–38 form a DNA-binding region, H-T-H motif; that stretch reads AAQTADLAGLPLDDLRRLLG. Substrate-binding residues include Tyr-98 and Asn-126. A Fe cation-binding site is contributed by His-129. Substrate is bound by residues Glu-176, His-182, and Ser-196. Residue His-182 participates in Fe cation binding. Positions 234 to 290 constitute an HTH cro/C1-type 2 domain; it reads VLDLFLARRAHTRTSAAEAAGVPPADLEAALRSPASETGLTVLRTLGRALGFDYRVL. The H-T-H motif DNA-binding region spans 245 to 265; sequence TRTSAAEAAGVPPADLEAALR.

Belongs to the non-heme iron-dependent dioxygenase family. As to quaternary structure, homodimer. The cofactor is Fe(2+).

It catalyses the reaction 2-hydroxyethylphosphonate + O2 = hydroxymethylphosphonate + formate + H(+). The protein operates within secondary metabolite biosynthesis; bialaphos biosynthesis. Its function is as follows. Non-heme-dependent dioxygenase that catalyzes the conversion of 2-hydroxyethylphosphonate (HEP) to hydroxymethylphosphonate (HMP) in the biosynthesis of phosphinothricin tripeptide (PTT), also known as bialaphos (BA), a natural-product antibiotic and potent herbicide. PTT contains the unusual amino acid phosphinothricin attached to 2 alanine residues. Synthetic phosphinothricin (glufosinate) is a key component of commercial herbicides. The protein is 2-hydroxyethylphosphonate dioxygenase (hepD) of Streptomyces viridochromogenes (strain DSM 40736 / JCM 4977 / BCRC 1201 / Tue 494).